Reading from the N-terminus, the 151-residue chain is MKCPYCGYGESKVVDSRATDDKMAIRRRRECLKCNKRYTTYEKIENVPLLVIKKNMSREYFDRTKILNGLMKACQKRPVSRKQIEEIADEVEKKISNSVLTEINSSDIGEMIMESLKKVDEVSYVRFASVYRQFKDINTFMEEIKNLISNR.

Residues 3–34 (CPYCGYGESKVVDSRATDDKMAIRRRRECLKC) fold into a zinc finger. The ATP-cone domain occupies 49–139 (LLVIKKNMSR…VYRQFKDINT (91 aa)).

Belongs to the NrdR family. Requires Zn(2+) as cofactor.

Functionally, negatively regulates transcription of bacterial ribonucleotide reductase nrd genes and operons by binding to NrdR-boxes. This chain is Transcriptional repressor NrdR, found in Clostridium kluyveri (strain NBRC 12016).